The chain runs to 585 residues: MNFDITRYPILSFAHSVRRLRLLSIEQLPQLCTELRKYLLDVVSITQGHFASGLGVIEITVALHYVYDTPFDNLLWDVGHQSYPHKILTGRAEKIGSIRKKNGLHPFPFREESKYDILSVGHSSTSISAGLGLSIAAGKEGKNRKTICVVGDGSMTAGMAFEAMNHAGIIQSDLLVVLNDNQMSISKNIGALNKHLKFLRDIKKSSKIFNFSIFESLNFKYLGPFDGHNIFKLIEIFKKTKDYRKTCLLHLITKKGKGYLPAELDPIKWHTISQSFSSSSKILTYSDVFGSWLCEIAEFDKKIMAITPAMCEGSGMLKFSRLFPNQYFDVAIAEQHAVTFAAGLAIAGYKPVVSIYSTFLQRAYDQIIHDVALQKLPVLFAIDRGGIVGHDGPTHQGIFDLSYLRCIPGIVIMTPSNENECRQMLYTGYMYKEGPSVVRYPKGKGIGMSLSPMKLIPLGKSLIKRVGEKIAILNFGALLQNAYLAAEKLNATLIDMRFVKPLDTNMILKLSLKYNFLVTIEEGVIAGGAGSAVNEFIMMRKILLPVLNIGLPDMFIAHGSQEEIKHDYQLDPEGIQNKILAWLSY.

Residues His-80 and 121–123 (GHS) contribute to the thiamine diphosphate site. Asp-152 contacts Mg(2+). Thiamine diphosphate-binding positions include 153–154 (GS), Asn-181, Tyr-259, and Glu-334. Asn-181 is a binding site for Mg(2+).

The protein belongs to the transketolase family. DXPS subfamily. In terms of assembly, homodimer. The cofactor is Mg(2+). Thiamine diphosphate serves as cofactor.

It carries out the reaction D-glyceraldehyde 3-phosphate + pyruvate + H(+) = 1-deoxy-D-xylulose 5-phosphate + CO2. The protein operates within metabolic intermediate biosynthesis; 1-deoxy-D-xylulose 5-phosphate biosynthesis; 1-deoxy-D-xylulose 5-phosphate from D-glyceraldehyde 3-phosphate and pyruvate: step 1/1. In terms of biological role, catalyzes the acyloin condensation reaction between C atoms 2 and 3 of pyruvate and glyceraldehyde 3-phosphate to yield 1-deoxy-D-xylulose-5-phosphate (DXP). The protein is 1-deoxy-D-xylulose-5-phosphate synthase of Buchnera aphidicola subsp. Schizaphis graminum (strain Sg).